The primary structure comprises 218 residues: Deoxyribose-phosphate aldolase (218 aa).

The active-site Proton donor/acceptor is the D92. The active-site Schiff-base intermediate with acetaldehyde is the K155. Residue K184 is the Proton donor/acceptor of the active site.

This sequence belongs to the DeoC/FbaB aldolase family. DeoC type 1 subfamily.

It is found in the cytoplasm. The enzyme catalyses 2-deoxy-D-ribose 5-phosphate = D-glyceraldehyde 3-phosphate + acetaldehyde. Its pathway is carbohydrate degradation; 2-deoxy-D-ribose 1-phosphate degradation; D-glyceraldehyde 3-phosphate and acetaldehyde from 2-deoxy-alpha-D-ribose 1-phosphate: step 2/2. Functionally, catalyzes a reversible aldol reaction between acetaldehyde and D-glyceraldehyde 3-phosphate to generate 2-deoxy-D-ribose 5-phosphate. The protein is Deoxyribose-phosphate aldolase of Clostridium kluyveri (strain NBRC 12016).